The sequence spans 864 residues: DNA mismatch repair protein MutS (864 aa).

607-614 (GPNMGGKS) contacts ATP.

This sequence belongs to the DNA mismatch repair MutS family.

In terms of biological role, this protein is involved in the repair of mismatches in DNA. It is possible that it carries out the mismatch recognition step. This protein has a weak ATPase activity. The polypeptide is DNA mismatch repair protein MutS (Neisseria meningitidis serogroup A / serotype 4A (strain DSM 15465 / Z2491)).